The sequence spans 372 residues: Fatty acid 2-hydroxylase (372 aa).

Residues 8 to 86 (AASFTSAEVQ…LEQYYVGELR (79 aa)) form the Cytochrome b5 heme-binding domain. The heme site is built by histidine 43 and histidine 69. 2 consecutive transmembrane segments (helical) span residues 168–188 (VWYS…WSYY) and 213–233 (SVFI…EYLI). The Fatty acid hydroxylase domain maps to 219–361 (FVLGMLIWTL…TKLWDYFFHT (143 aa)). Zn(2+)-binding residues include histidine 234, histidine 239, histidine 257, histidine 260, and histidine 261. Transmembrane regions (helical) follow at residues 268–288 (SRLV…YVFL) and 290–310 (LILP…GYVL). Histidine 315, histidine 319, histidine 336, histidine 339, and histidine 340 together coordinate Zn(2+).

It belongs to the sterol desaturase family. SCS7 subfamily. Zn(2+) serves as cofactor. Detected in oligodendrocytes (at protein level). Detected in sciatic nerve.

It localises to the endoplasmic reticulum membrane. The protein resides in the microsome membrane. The catalysed reaction is a 1,2-saturated fatty acid + 2 Fe(II)-[cytochrome b5] + O2 + 2 H(+) = a (R)-2-hydroxy fatty acid + 2 Fe(III)-[cytochrome b5] + H2O. The enzyme catalyses hexadecanoate + 2 Fe(II)-[cytochrome b5] + O2 + 2 H(+) = (R)-2-hydroxyhexadecanoate + 2 Fe(III)-[cytochrome b5] + H2O. It catalyses the reaction octadecanoate + 2 Fe(II)-[cytochrome b5] + O2 + 2 H(+) = (R)-2-hydroxyoctadecanoate + 2 Fe(III)-[cytochrome b5] + H2O. It carries out the reaction docosanoate + 2 Fe(II)-[cytochrome b5] + O2 + 2 H(+) = 2-hydroxydocosanoate + 2 Fe(III)-[cytochrome b5] + H2O. The catalysed reaction is tetracosanoate + 2 Fe(II)-[cytochrome b5] + O2 + 2 H(+) = (R)-2-hydroxytetracosanoate + 2 Fe(III)-[cytochrome b5] + H2O. Its pathway is lipid metabolism; fatty acid metabolism. It participates in sphingolipid metabolism; galactosylceramide biosynthesis. In terms of biological role, catalyzes the hydroxylation of free fatty acids at the C-2 position to produce 2-hydroxy fatty acids, which are building blocks of sphingolipids and glycosphingolipids common in neural tissue and epidermis. FA2H is stereospecific for the production of (R)-2-hydroxy fatty acids. Plays an essential role in the synthesis of galactosphingolipids of the myelin sheath. Responsible for the synthesis of sphingolipids and glycosphingolipids involved in the formation of epidermal lamellar bodies critical for skin permeability barrier. Participates in the synthesis of glycosphingolipids and a fraction of type II wax diesters in sebaceous gland, specifically regulating hair follicle homeostasis. Involved in the synthesis of sphingolipids of plasma membrane rafts, controlling lipid raft mobility and trafficking of raft-associated proteins. The polypeptide is Fatty acid 2-hydroxylase (Rattus norvegicus (Rat)).